Here is a 347-residue protein sequence, read N- to C-terminus: Protein RecA (347 aa).

Position 70 to 77 (70 to 77) interacts with ATP; that stretch reads GPESSGKT.

It belongs to the RecA family.

It localises to the cytoplasm. Can catalyze the hydrolysis of ATP in the presence of single-stranded DNA, the ATP-dependent uptake of single-stranded DNA by duplex DNA, and the ATP-dependent hybridization of homologous single-stranded DNAs. It interacts with LexA causing its activation and leading to its autocatalytic cleavage. This Ruegeria pomeroyi (strain ATCC 700808 / DSM 15171 / DSS-3) (Silicibacter pomeroyi) protein is Protein RecA.